A 307-amino-acid polypeptide reads, in one-letter code: Pseudouridine-5'-phosphate glycosidase (307 aa).

Glutamate 28 acts as the Proton donor in catalysis. Lysine 89 and valine 109 together coordinate substrate. Aspartate 141 serves as a coordination point for Mn(2+). 143–145 (SAD) is a binding site for substrate. Lysine 162 acts as the Nucleophile in catalysis.

It belongs to the pseudouridine-5'-phosphate glycosidase family. As to quaternary structure, homotrimer. The cofactor is Mn(2+).

It carries out the reaction D-ribose 5-phosphate + uracil = psi-UMP + H2O. Catalyzes the reversible cleavage of pseudouridine 5'-phosphate (PsiMP) to ribose 5-phosphate and uracil. Functions biologically in the cleavage direction, as part of a pseudouridine degradation pathway. The chain is Pseudouridine-5'-phosphate glycosidase from Alkaliphilus metalliredigens (strain QYMF).